Consider the following 394-residue polypeptide: Probable peptidoglycan glycosyltransferase FtsW (394 aa).

At 1 to 27 the chain is on the cytoplasmic side; the sequence is MEFLQNIKKNYDEWTRITPQGLLYDRA. A helical transmembrane segment spans residues 28-48; the sequence is LFWLFVILLLIGLVAVTSASI. Topologically, residues 49 to 66 are periplasmic; that stretch reads PYSSRLFNDPFYFAKRDA. The chain crosses the membrane as a helical span at residues 67–87; it reads IYVLLSLLTCYISLQISSSQW. The Cytoplasmic segment spans residues 88 to 93; the sequence is EKWHAK. Residues 94–114 form a helical membrane-spanning segment; the sequence is IFLFSVILLLLVPFIGTSVNG. Topologically, residues 115–120 are periplasmic; that stretch reads AKRWIS. Residues 121 to 141 form a helical membrane-spanning segment; that stretch reads LGILNFQPAEFAKLALTCFLA. The Cytoplasmic segment spans residues 142–155; the sequence is SYFTRRYDEVRSRH. The next 2 helical transmembrane spans lie at 156-176 and 177-197; these read VSIF…LLQP and DLGS…IVGA. A topological domain (cytoplasmic) is located at residue Lys-198. The chain crosses the membrane as a helical span at residues 199–219; that stretch reads ILQFVGLIALGGILFVWLVLT. Residues 220 to 277 are Periplasmic-facing; it reads ASYRLKRFIGFLEPFKEPYGTGFQLTNSLIAFGRGEITGEGLGNSIQKLDYLPEAHTD. The chain crosses the membrane as a helical span at residues 278–298; sequence FIMAIIGEEFGFIGILIVILL. Residues 299–322 lie on the Cytoplasmic side of the membrane; sequence LGLLIFRAMKIGRESLMLEQRFRG. Residues 323–343 traverse the membrane as a helical segment; the sequence is FFALGIGFWIFFQGFVNLGMA. Over 344–353 the chain is Periplasmic; that stretch reads LGMLPTKGLT. Residues 354 to 374 traverse the membrane as a helical segment; sequence FPLVSYGGSSIIIMSATIGIL. The Cytoplasmic portion of the chain corresponds to 375-394; it reads LRIDHENRLFRIGQARLRDD.

The protein belongs to the SEDS family. FtsW subfamily.

It is found in the cell inner membrane. It catalyses the reaction [GlcNAc-(1-&gt;4)-Mur2Ac(oyl-L-Ala-gamma-D-Glu-L-Lys-D-Ala-D-Ala)](n)-di-trans,octa-cis-undecaprenyl diphosphate + beta-D-GlcNAc-(1-&gt;4)-Mur2Ac(oyl-L-Ala-gamma-D-Glu-L-Lys-D-Ala-D-Ala)-di-trans,octa-cis-undecaprenyl diphosphate = [GlcNAc-(1-&gt;4)-Mur2Ac(oyl-L-Ala-gamma-D-Glu-L-Lys-D-Ala-D-Ala)](n+1)-di-trans,octa-cis-undecaprenyl diphosphate + di-trans,octa-cis-undecaprenyl diphosphate + H(+). It participates in cell wall biogenesis; peptidoglycan biosynthesis. Its function is as follows. Peptidoglycan polymerase that is essential for cell division. The sequence is that of Probable peptidoglycan glycosyltransferase FtsW from Haemophilus influenzae (strain ATCC 51907 / DSM 11121 / KW20 / Rd).